A 642-amino-acid polypeptide reads, in one-letter code: Threonine--tRNA ligase (642 aa).

The 61-residue stretch at 1-61 (MPVITLPDGS…DTDAQLAIIT (61 aa)) folds into the TGS domain. Residues 243–534 (DHRKIGKQLD…LTEEFAGFFP (292 aa)) form a catalytic region. Zn(2+) is bound by residues Cys-334, His-385, and His-511.

Belongs to the class-II aminoacyl-tRNA synthetase family. As to quaternary structure, homodimer. Zn(2+) serves as cofactor.

Its subcellular location is the cytoplasm. The enzyme catalyses tRNA(Thr) + L-threonine + ATP = L-threonyl-tRNA(Thr) + AMP + diphosphate + H(+). Catalyzes the attachment of threonine to tRNA(Thr) in a two-step reaction: L-threonine is first activated by ATP to form Thr-AMP and then transferred to the acceptor end of tRNA(Thr). Also edits incorrectly charged L-seryl-tRNA(Thr). This Pectobacterium atrosepticum (strain SCRI 1043 / ATCC BAA-672) (Erwinia carotovora subsp. atroseptica) protein is Threonine--tRNA ligase.